The chain runs to 1461 residues: A disintegrin and metalloproteinase with thrombospondin motifs adt-1 (1461 aa).

A signal peptide spans 1-21 (MPPFYIVITFLLSTVFRISQS). Positions 22-163 (VHHHLNEEEL…HLQKERHLVY (142 aa)) are excised as a propeptide. An N-linked (GlcNAc...) asparagine glycan is attached at asparagine 69. Residues 190–197 (SFCDTSEQ) carry the Cysteine switch motif. A glycan (N-linked (GlcNAc...) asparagine) is linked at asparagine 212. One can recognise a Peptidase M12B domain in the interval 233–435 (ITLEIGLFLD…CSVREFNAFL (203 aa)). Histidine 388 is a Zn(2+) binding site. Residue glutamate 389 is part of the active site. Positions 392 and 398 each coordinate Zn(2+). Cysteine 405 and cysteine 410 are oxidised to a cystine. The 83-residue stretch at 464–546 (RLPGQRFTAD…TFGLTPVPID (83 aa)) folds into the Disintegrin domain. TSP type-1 domains are found at residues 708–759 (HQWE…RDCE), 761–802 (FGEW…RPCD), 804–852 (EGCW…QKCI), 853–898 (SQSW…QQCP), 903–952 (LSVW…GPCE), 955–1000 (YLTW…IACL), 1035–1083 (SIHS…NSCL), 1087–1133 (IWSD…PSCS), 1148–1200 (APRW…GSCS), 1203–1260 (AGGW…NVCS), 1265–1321 (DGGW…ARCH), 1324–1378 (DGGW…PACD), and 1382–1435 (DGEW…RQSP). 3 disulfides stabilise this stretch: cysteine 719–cysteine 751, cysteine 723–cysteine 758, and cysteine 735–cysteine 741. 6 disulfide bridges follow: cysteine 816/cysteine 846, cysteine 820/cysteine 851, cysteine 831/cysteine 836, cysteine 862/cysteine 892, cysteine 866/cysteine 897, and cysteine 877/cysteine 882. 3 disulfide bridges follow: cysteine 1047/cysteine 1077, cysteine 1051/cysteine 1082, and cysteine 1062/cysteine 1067. 12 disulfide bridges follow: cysteine 1160–cysteine 1194, cysteine 1162–cysteine 1199, cysteine 1173–cysteine 1184, cysteine 1215–cysteine 1253, cysteine 1219–cysteine 1259, cysteine 1231–cysteine 1243, cysteine 1277–cysteine 1314, cysteine 1281–cysteine 1320, cysteine 1292–cysteine 1304, cysteine 1336–cysteine 1372, cysteine 1340–cysteine 1377, and cysteine 1351–cysteine 1362.

The cofactor is Zn(2+). In hermaphrodites, expressed in the vulva, head ganglia, ventral nerve cord and amphid neurons. Expressed in the rays of the male tail.

It localises to the secreted. Functionally, plays a role in ray morphogenesis in the male tail, probably by remodeling the extracellular matrix (ECM) in the cuticle. The chain is A disintegrin and metalloproteinase with thrombospondin motifs adt-1 from Caenorhabditis elegans.